Here is a 411-residue protein sequence, read N- to C-terminus: Protein DDI1 homolog 2 (411 aa).

The region spanning 1-81 (MLLTVFCAPR…LVLRQAERLR (81 aa)) is the Ubiquitin-like domain. Positions 82–144 (APPQPTVPGL…SGVSPQGLDN (63 aa)) are disordered. Over residues 108–121 (QNRNRPQQAQRPST) the composition is skewed to low complexity. Residue aspartate 262 is part of the active site. The Ubiquitin-binding motif lies at 387–406 (DEIADRELAEAIQRSVQDSG).

It belongs to the DDI1 family. Homodimer.

The protein localises to the cytoplasm. Its subcellular location is the cytosol. The protein resides in the chromosome. In terms of biological role, aspartic protease that mediates the cleavage of NFE2L1/NRF1 at 'Leu-104', thereby promoting release of NFE2L1/NRF1 from the endoplasmic reticulum membrane. Ubiquitination of NFE2L1/NRF1 is a prerequisite for cleavage, suggesting that DDI2 specifically recognizes and binds ubiquitinated NFE2L1/NRF1. Seems to act as a proteasomal shuttle which links the proteasome and replication fork proteins like RTF2. Required for cellular survival following replication stress. This Danio rerio (Zebrafish) protein is Protein DDI1 homolog 2 (ddi2).